A 95-amino-acid chain; its full sequence is Co-chaperonin GroES (95 aa).

This sequence belongs to the GroES chaperonin family. In terms of assembly, heptamer of 7 subunits arranged in a ring. Interacts with the chaperonin GroEL.

The protein localises to the cytoplasm. Together with the chaperonin GroEL, plays an essential role in assisting protein folding. The GroEL-GroES system forms a nano-cage that allows encapsulation of the non-native substrate proteins and provides a physical environment optimized to promote and accelerate protein folding. GroES binds to the apical surface of the GroEL ring, thereby capping the opening of the GroEL channel. The chain is Co-chaperonin GroES from Zymomonas mobilis subsp. mobilis (strain ATCC 31821 / ZM4 / CP4).